We begin with the raw amino-acid sequence, 77 residues long: Putative defensin-like protein 160 (77 aa).

The N-terminal stretch at 1 to 24 (MAKLSCSYFFILMLVFSALLMVEC) is a signal peptide. 4 disulfides stabilise this stretch: Cys30–Cys77, Cys40–Cys59, Cys45–Cys71, and Cys49–Cys73.

The protein belongs to the DEFL family.

It localises to the secreted. In Arabidopsis thaliana (Mouse-ear cress), this protein is Putative defensin-like protein 160 (LCR26).